We begin with the raw amino-acid sequence, 482 residues long: Probable 2-carboxy-D-arabinitol-1-phosphatase (482 aa).

A chloroplast-targeting transit peptide spans methionine 1–serine 34. The Tele-phosphohistidine intermediate role is filled by histidine 55. Glutamate 129 acts as the Proton donor/acceptor in catalysis.

This sequence belongs to the phosphoglycerate mutase family.

It localises to the plastid. Its subcellular location is the chloroplast stroma. It catalyses the reaction 2-carboxy-D-arabinitol 1-phosphate + H2O = 2-carboxy-D-arabinitol + phosphate. In terms of biological role, phosphoglycerate mutase-like protein lacking PGM activity, but having 2-carboxy-D-arabinitol 1-phosphate (CA1P) phosphatase activity. Prevents the accumulation of D-glycero-2,3-pentodiulose-1,5-bisphosphate (PDBP) a potent inhibitor of ribulose-1,5-bisphosphate carboxylase (RuBisCO). PDBP is produced during the oxidation of ribulose-1,5-bisphosphate, the substrate of RuBisCO. The chain is Probable 2-carboxy-D-arabinitol-1-phosphatase from Arabidopsis thaliana (Mouse-ear cress).